Reading from the N-terminus, the 304-residue chain is UDP-3-O-acyl-N-acetylglucosamine deacetylase (304 aa).

Zn(2+) is bound by residues His78, His237, and Asp241. The Proton donor role is filled by His264.

The protein belongs to the LpxC family. Zn(2+) is required as a cofactor.

It catalyses the reaction a UDP-3-O-[(3R)-3-hydroxyacyl]-N-acetyl-alpha-D-glucosamine + H2O = a UDP-3-O-[(3R)-3-hydroxyacyl]-alpha-D-glucosamine + acetate. It participates in glycolipid biosynthesis; lipid IV(A) biosynthesis; lipid IV(A) from (3R)-3-hydroxytetradecanoyl-[acyl-carrier-protein] and UDP-N-acetyl-alpha-D-glucosamine: step 2/6. Its function is as follows. Catalyzes the hydrolysis of UDP-3-O-myristoyl-N-acetylglucosamine to form UDP-3-O-myristoylglucosamine and acetate, the committed step in lipid A biosynthesis. The protein is UDP-3-O-acyl-N-acetylglucosamine deacetylase of Acidithiobacillus ferrooxidans (strain ATCC 53993 / BNL-5-31) (Leptospirillum ferrooxidans (ATCC 53993)).